The sequence spans 258 residues: Dihydroorotate dehydrogenase B (NAD(+)), electron transfer subunit (258 aa).

Residues 2–100 form the FAD-binding FR-type domain; it reads ILKENLTVVS…LGPQGNGFDL (99 aa). FAD is bound by residues 51–54, 68–70, and 75–76; these read RPIS, IYR, and GT. Residues Cys-220, Cys-225, Cys-228, and Cys-244 each coordinate [2Fe-2S] cluster.

The protein belongs to the PyrK family. As to quaternary structure, heterotetramer of 2 PyrK and 2 PyrD type B subunits. [2Fe-2S] cluster serves as cofactor. FAD is required as a cofactor.

Its pathway is pyrimidine metabolism; UMP biosynthesis via de novo pathway; orotate from (S)-dihydroorotate (NAD(+) route): step 1/1. In terms of biological role, responsible for channeling the electrons from the oxidation of dihydroorotate from the FMN redox center in the PyrD type B subunit to the ultimate electron acceptor NAD(+). This Streptococcus mutans serotype c (strain ATCC 700610 / UA159) protein is Dihydroorotate dehydrogenase B (NAD(+)), electron transfer subunit.